We begin with the raw amino-acid sequence, 95 residues long: Large ribosomal subunit protein bL25 (95 aa).

Belongs to the bacterial ribosomal protein bL25 family. Part of the 50S ribosomal subunit; part of the 5S rRNA/L5/L18/L25 subcomplex. Contacts the 5S rRNA. Binds to the 5S rRNA independently of L5 and L18.

This is one of the proteins that binds to the 5S RNA in the ribosome where it forms part of the central protuberance. This is Large ribosomal subunit protein bL25 from Shewanella frigidimarina (strain NCIMB 400).